Consider the following 361-residue polypeptide: Mitochondrial fission regulator 2 (361 aa).

Ser137 bears the Phosphoserine mark. Disordered regions lie at residues 191–286 and 298–322; these read FIDL…VPNM and LRPV…EWDP. Over residues 219-231 the composition is skewed to pro residues; the sequence is VLPPPPPPPPPPQ. The segment covering 232 to 244 has biased composition (low complexity); that stretch reads FSLQPPSSLPMQP. A compositionally biased stretch (basic and acidic residues) spans 250–282; the sequence is HDIDSLATEMERQLSGVKKTDDSHHSKSQRLRD. Ser304 and Ser340 each carry phosphoserine.

Belongs to the MTFR1 family. Expressed predominantly in testis (at protein level). Expressed to a lower extent in spleen.

The protein resides in the mitochondrion. Its function is as follows. May play a role in mitochondrial aerobic respiration essentially in the testis. Can also promote mitochondrial fission. In Mus musculus (Mouse), this protein is Mitochondrial fission regulator 2 (Mtfr2).